The primary structure comprises 58 residues: UPF0337 protein CE1672 (58 aa).

Positions 1–39 (MGLGDKIRNTAEKASGKVKEATGKATDNEKLEAEGKTDQ) are enriched in basic and acidic residues. Residues 1 to 58 (MGLGDKIRNTAEKASGKVKEATGKATDNEKLEAEGKTDQFKGNAKNTVENAKDTLRGN) are disordered.

This sequence belongs to the UPF0337 (CsbD) family.

The chain is UPF0337 protein CE1672 from Corynebacterium efficiens (strain DSM 44549 / YS-314 / AJ 12310 / JCM 11189 / NBRC 100395).